A 675-amino-acid chain; its full sequence is Pesticidal crystal protein Cry25Aa (675 aa).

It belongs to the delta endotoxin family.

Promotes colloidosmotic lysis by binding to the midgut epithelial cells of insects. This is Pesticidal crystal protein Cry25Aa (cry25Aa) from Bacillus thuringiensis subsp. jegathesan.